A 70-amino-acid polypeptide reads, in one-letter code: Conotoxin Mr3.8 (70 aa).

The first 24 residues, 1-24, serve as a signal peptide directing secretion; it reads MLKMGVVLFIFLVLFPLATLQLDA. A propeptide spanning residues 25-54 is cleaved from the precursor; it reads DQPVERYAKNKQLFNPHKRRGIILRAPGKR. Cystine bridges form between cysteine 55–cysteine 67, cysteine 56–cysteine 68, and cysteine 61–cysteine 65.

It belongs to the conotoxin M superfamily. In terms of tissue distribution, expressed by the venom duct.

Its subcellular location is the secreted. Its function is as follows. In vitro, inhibits proliferation of the mice ovarian cancer cells ID8. The protein is Conotoxin Mr3.8 of Conus marmoreus (Marble cone).